A 309-amino-acid polypeptide reads, in one-letter code: Probable manganese-dependent inorganic pyrophosphatase (309 aa).

6 residues coordinate Mn(2+): His-9, Asp-13, Asp-15, Asp-75, His-97, and Asp-149.

Belongs to the PPase class C family. Mn(2+) serves as cofactor.

The protein resides in the cytoplasm. The catalysed reaction is diphosphate + H2O = 2 phosphate + H(+). The chain is Probable manganese-dependent inorganic pyrophosphatase from Lactiplantibacillus plantarum (strain ATCC BAA-793 / NCIMB 8826 / WCFS1) (Lactobacillus plantarum).